The primary structure comprises 511 residues: Exodeoxyribonuclease 7 large subunit (511 aa).

Belongs to the XseA family. Heterooligomer composed of large and small subunits.

Its subcellular location is the cytoplasm. The enzyme catalyses Exonucleolytic cleavage in either 5'- to 3'- or 3'- to 5'-direction to yield nucleoside 5'-phosphates.. Bidirectionally degrades single-stranded DNA into large acid-insoluble oligonucleotides, which are then degraded further into small acid-soluble oligonucleotides. The chain is Exodeoxyribonuclease 7 large subunit from Brucella suis biovar 1 (strain 1330).